Consider the following 284-residue polypeptide: Bifunctional protein FolD (284 aa).

NADP(+) contacts are provided by residues 166–168 and Ser-191; that span reads GRS.

The protein belongs to the tetrahydrofolate dehydrogenase/cyclohydrolase family. In terms of assembly, homodimer.

It catalyses the reaction (6R)-5,10-methylene-5,6,7,8-tetrahydrofolate + NADP(+) = (6R)-5,10-methenyltetrahydrofolate + NADPH. It carries out the reaction (6R)-5,10-methenyltetrahydrofolate + H2O = (6R)-10-formyltetrahydrofolate + H(+). The protein operates within one-carbon metabolism; tetrahydrofolate interconversion. Catalyzes the oxidation of 5,10-methylenetetrahydrofolate to 5,10-methenyltetrahydrofolate and then the hydrolysis of 5,10-methenyltetrahydrofolate to 10-formyltetrahydrofolate. In Delftia acidovorans (strain DSM 14801 / SPH-1), this protein is Bifunctional protein FolD.